Consider the following 198-residue polypeptide: Guanylate kinase (198 aa).

A Guanylate kinase-like domain is found at 4-186 (PRPVVLSGPS…AYATLKQALS (183 aa)). Residue 14 to 19 (GAGKST) participates in ATP binding. Position 37–51 (37–51 (SHTTRNPRPGEEDGK)) interacts with substrate. Active-site residues include R44, R137, and R148. An ATP-binding site is contributed by 171–172 (ND).

Belongs to the guanylate kinase family. As to quaternary structure, monomer. Interacts with RD3. Widely expressed. In retina is expressed in inner segment, outer nuclear layer, outer plexiform layer, inner plexiform layer, and ganglion cell layer (at protein level).

The protein localises to the photoreceptor inner segment. It is found in the cytoplasm. The protein resides in the cytosol. Its subcellular location is the mitochondrion. The catalysed reaction is GMP + ATP = GDP + ADP. Functionally, catalyzes the phosphorylation of GMP to GDP. Essential enzyme for recycling GMP and indirectly, cyclic GMP (cGMP). Involved in the cGMP metabolism in photoreceptors. The polypeptide is Guanylate kinase (Mus musculus (Mouse)).